Here is a 211-residue protein sequence, read N- to C-terminus: MRVRNRKGATELLEANPQYVVLNPLEAKAKWRDLFGNDNPIHVEVGSGKGAFVSGMAKQNPDINYIGIDIQKSVLSYALDKVLEVGVPNIKLLWVDGSDLTDYFEDGEIDRLYLNFSDPWPKKRHEKRRLTYKTFLDTFKRILPENGEIHFKTDNRGLFEYSLVSFSQYGMKLNGVWLDLHASDFEGNVMTEYEQKFSNKGQVIYRVEAEF.

Positions 44, 69, 96, and 118 each coordinate S-adenosyl-L-methionine. The active site involves D118. A substrate-binding site is contributed by K122. Residues 124 to 129 (RHEKRR) are interaction with RNA. Substrate-binding positions include D154 and 191-194 (TEYE).

The protein belongs to the class I-like SAM-binding methyltransferase superfamily. TrmB family.

It catalyses the reaction guanosine(46) in tRNA + S-adenosyl-L-methionine = N(7)-methylguanosine(46) in tRNA + S-adenosyl-L-homocysteine. It functions in the pathway tRNA modification; N(7)-methylguanine-tRNA biosynthesis. Catalyzes the formation of N(7)-methylguanine at position 46 (m7G46) in tRNA. In Streptococcus pneumoniae (strain JJA), this protein is tRNA (guanine-N(7)-)-methyltransferase.